Reading from the N-terminus, the 38-residue chain is Large ribosomal subunit protein bL36 (38 aa).

The protein belongs to the bacterial ribosomal protein bL36 family.

The protein is Large ribosomal subunit protein bL36 of Alcanivorax borkumensis (strain ATCC 700651 / DSM 11573 / NCIMB 13689 / SK2).